A 381-amino-acid polypeptide reads, in one-letter code: Chaperone protein DnaJ (381 aa).

One can recognise a J domain in the interval 5–70 (DFYEVLGVSR…QKKAAYDQYG (66 aa)). The segment at 136–214 (GVTKEIEVPT…CHGQGRKQKT (79 aa)) adopts a CR-type zinc-finger fold. Residues Cys149, Cys152, Cys166, Cys169, Cys188, Cys191, Cys202, and Cys205 each coordinate Zn(2+). 4 CXXCXGXG motif repeats span residues 149-156 (CDSCDGSG), 166-173 (CGTCHGHG), 188-195 (CPTCHGKG), and 202-209 (CNECHGQG).

The protein belongs to the DnaJ family. In terms of assembly, homodimer. Zn(2+) serves as cofactor.

Its subcellular location is the cytoplasm. Participates actively in the response to hyperosmotic and heat shock by preventing the aggregation of stress-denatured proteins and by disaggregating proteins, also in an autonomous, DnaK-independent fashion. Unfolded proteins bind initially to DnaJ; upon interaction with the DnaJ-bound protein, DnaK hydrolyzes its bound ATP, resulting in the formation of a stable complex. GrpE releases ADP from DnaK; ATP binding to DnaK triggers the release of the substrate protein, thus completing the reaction cycle. Several rounds of ATP-dependent interactions between DnaJ, DnaK and GrpE are required for fully efficient folding. Also involved, together with DnaK and GrpE, in the DNA replication of plasmids through activation of initiation proteins. In Vibrio parahaemolyticus serotype O3:K6 (strain RIMD 2210633), this protein is Chaperone protein DnaJ.